We begin with the raw amino-acid sequence, 145 residues long: Bacilliredoxin GK1781 (145 aa).

Belongs to the bacilliredoxin family.

In Geobacillus kaustophilus (strain HTA426), this protein is Bacilliredoxin GK1781.